The primary structure comprises 228 residues: uncharacterized protein (228 aa).

Residue 21–28 coordinates ATP; that stretch reads GMIALGKT.

This is an uncharacterized protein from Mycoplasma genitalium (strain ATCC 33530 / DSM 19775 / NCTC 10195 / G37) (Mycoplasmoides genitalium).